The primary structure comprises 371 residues: Putative agmatine deiminase (371 aa).

Cys-361 acts as the Amidino-cysteine intermediate in catalysis.

Belongs to the agmatine deiminase family.

It carries out the reaction agmatine + H2O = N-carbamoylputrescine + NH4(+). The chain is Putative agmatine deiminase from Selenomonas ruminantium.